Here is a 708-residue protein sequence, read N- to C-terminus: E3 ubiquitin-protein ligase Praja-2 (708 aa).

Residues 1–10 (MSQYTEKEPA) show a composition bias toward basic and acidic residues. Disordered regions lie at residues 1-30 (MSQYTEKEPAAMDQESGKAVWPKPAGGYQT) and 53-90 (ERSLGRAGDDYEVLELDDVPKENSSGSSPLDQVDSSLP). At serine 2 the chain carries N-acetylserine. Residues 74–90 (ENSSGSSPLDQVDSSLP) show a composition bias toward polar residues. Serine 196 is subject to Phosphoserine. Disordered stretches follow at residues 244–342 (GDTE…KQRS), 385–411 (TQRETENNQVTPESGATAGRQEVDNPF), and 425–495 (DEDS…QTSL). Threonine 246 is subject to Phosphothreonine. Residues 249-276 (VHQNSQEIQRSSQDEMVSTKQQNNTSQE) show a composition bias toward polar residues. A phosphoserine mark is found at serine 253, serine 309, and serine 323. Polar residues predominate over residues 322–332 (ISSSQVDQETG). Basic and acidic residues predominate over residues 333 to 342 (FNRHEAKQRS). A Phosphoserine; by PKA modification is found at serine 342. Threonine 389 is subject to Phosphothreonine; by PKA. Residue serine 432 is modified to Phosphoserine. Residues 467-483 (NEPELQSDSSGPEEENQ) are compositionally biased toward acidic residues. Residues 484-493 (ELSLQEGEQT) are compositionally biased toward polar residues. The interaction with PRKAR1A, PRKAR2A and PRKAR2B stretch occupies residues 531 to 708 (DGNNNLEDDS…PSNDSIAEAP (178 aa)). Residues 550–570 (WSLFDGFADGLGVAEAISYVD) form a mediates interaction with TBC1D31 region. The RING-type; atypical zinc finger occupies 634 to 675 (CPICCSEYIKDDIATELPCHHFFHKPCVSIWLQKSGTCPVCR). A disordered region spans residues 685–708 (ASAAPSSEPDPDAPPSNDSIAEAP). The span at 699-708 (PSNDSIAEAP) shows a compositional bias: low complexity.

In terms of assembly, binds ubiquitin-conjugating enzymes (E2s). In vitro, interacts with the ubiquitin-conjugating enzyme, UBE2D2. The phosphorylated form interacts with PRKAR1A, PRKAR2A and PRKAR2B. Binds the catalytic subunits of cAMP-dependent protein kinase. Interacts with MFHAS1. Interacts with TBC1D31; the interaction is direct and recruits PJA2 to centrosomes.

It is found in the cytoplasm. The protein resides in the cell membrane. It localises to the endoplasmic reticulum membrane. The protein localises to the golgi apparatus membrane. Its subcellular location is the synapse. It is found in the postsynaptic density. The protein resides in the cytoskeleton. It localises to the microtubule organizing center. The protein localises to the centrosome. The enzyme catalyses S-ubiquitinyl-[E2 ubiquitin-conjugating enzyme]-L-cysteine + [acceptor protein]-L-lysine = [E2 ubiquitin-conjugating enzyme]-L-cysteine + N(6)-ubiquitinyl-[acceptor protein]-L-lysine.. Its pathway is protein modification; protein ubiquitination. Its function is as follows. Has E2-dependent E3 ubiquitin-protein ligase activity. Responsible for ubiquitination of cAMP-dependent protein kinase type I and type II-alpha/beta regulatory subunits and for targeting them for proteasomal degradation. Essential for PKA-mediated long-term memory processes. Through the ubiquitination of MFHAS1, positively regulates the TLR2 signaling pathway that leads to the activation of the downstream p38 and JNK MAP kinases and promotes the polarization of macrophages toward the pro-inflammatory M1 phenotype. Plays a role in ciliogenesis by ubiquitinating OFD1. The sequence is that of E3 ubiquitin-protein ligase Praja-2 (PJA2) from Pongo abelii (Sumatran orangutan).